The chain runs to 438 residues: GTPase Der (438 aa).

EngA-type G domains are found at residues 4-168 (PIVA…PAVP) and 176-351 (LKVA…EAAN). GTP-binding positions include 10 to 17 (GRPNVGKS), 57 to 61 (DTGGI), 120 to 123 (NKVE), 182 to 189 (GRPNVGKS), 229 to 233 (DTAGM), and 294 to 297 (NKWD). The KH-like domain maps to 352-436 (RRVATGTLNA…PIRLIFRRGR (85 aa)).

Belongs to the TRAFAC class TrmE-Era-EngA-EngB-Septin-like GTPase superfamily. EngA (Der) GTPase family. Associates with the 50S ribosomal subunit.

GTPase that plays an essential role in the late steps of ribosome biogenesis. In Moorella thermoacetica (strain ATCC 39073 / JCM 9320), this protein is GTPase Der.